A 507-amino-acid chain; its full sequence is Peroxisomal membrane protein PEX14 (507 aa).

Composition is skewed to polar residues over residues Met1–Pro10 and Glu32–Lys48. Positions Met1–Pro52 are disordered. The Peroxisomal portion of the chain corresponds to Met1–Trp152. Involved in interaction with PEX5 stretches follow at residues Ile58–Leu65 and Arg78–Arg97. The helical transmembrane segment at Tyr153–Ile173 threads the bilayer. Residues Lys174–Asn507 are Cytoplasmic-facing. The segment covering Val288–Asp302 has biased composition (polar residues). Disordered regions lie at residues Val288–Tyr329, Asn344–Ser394, Ala409–Pro435, and Pro448–Asn507. A compositionally biased stretch (low complexity) spans Ala308–Ala322. Residues Gln378–Ser394 are compositionally biased toward polar residues.

It belongs to the peroxin-14 family. Interacts with PEX13; forming the PEX13-PEX14 docking complex. Interacts with PEX5 (via WxxxF/Y motifs). In terms of tissue distribution, expressed in flowers, siliques, leaves and roots.

It is found in the peroxisome membrane. In terms of biological role, component of the PEX13-PEX14 docking complex, a translocon channel that specifically mediates the import of peroxisomal cargo proteins bound to PEX5 receptor. The PEX13-PEX14 docking complex forms a large import pore which can be opened to a diameter of about 9 nm. Mechanistically, PEX5 receptor along with cargo proteins associates with the PEX14 subunit of the PEX13-PEX14 docking complex in the cytosol, leading to the insertion of the receptor into the organelle membrane with the concomitant translocation of the cargo into the peroxisome matrix. The sequence is that of Peroxisomal membrane protein PEX14 from Arabidopsis thaliana (Mouse-ear cress).